The sequence spans 943 residues: Isoleucine--tRNA ligase (943 aa).

The 'HIGH' region motif lies at 58-68 (PYANGTIHIGH). Residue Glu-567 participates in L-isoleucyl-5'-AMP binding. The 'KMSKS' region signature appears at 608 to 612 (KMSKS). Lys-611 is a binding site for ATP. Positions 906, 909, 926, and 929 each coordinate Zn(2+).

It belongs to the class-I aminoacyl-tRNA synthetase family. IleS type 1 subfamily. Monomer. It depends on Zn(2+) as a cofactor.

The protein localises to the cytoplasm. The enzyme catalyses tRNA(Ile) + L-isoleucine + ATP = L-isoleucyl-tRNA(Ile) + AMP + diphosphate. Functionally, catalyzes the attachment of isoleucine to tRNA(Ile). As IleRS can inadvertently accommodate and process structurally similar amino acids such as valine, to avoid such errors it has two additional distinct tRNA(Ile)-dependent editing activities. One activity is designated as 'pretransfer' editing and involves the hydrolysis of activated Val-AMP. The other activity is designated 'posttransfer' editing and involves deacylation of mischarged Val-tRNA(Ile). This Pseudomonas syringae pv. tomato (strain ATCC BAA-871 / DC3000) protein is Isoleucine--tRNA ligase.